Consider the following 265-residue polypeptide: Chanoclavine-I dehydrogenase easD (265 aa).

The N-terminal stretch at 1–20 (MSFVSSKIFAITGGASGIGA) is a signal peptide. NADP(+) is bound by residues I18, D66, R132, Y169, K173, and T205. Y169 serves as the catalytic Proton donor. Catalysis depends on K173, which acts as the Lowers pKa of active site Tyr.

It belongs to the short-chain dehydrogenases/reductases (SDR) family. As to quaternary structure, homotetramer.

It catalyses the reaction chanoclavine-I + NAD(+) = chanoclavine-I aldehyde + NADH + H(+). The protein operates within alkaloid biosynthesis; ergot alkaloid biosynthesis. In terms of biological role, chanoclavine-I dehydrogenase; part of the gene cluster that mediates the biosynthesis of fungal ergot alkaloid. DmaW catalyzes the first step of ergot alkaloid biosynthesis by condensing dimethylallyl diphosphate (DMAP) and tryptophan to form 4-dimethylallyl-L-tryptophan. The second step is catalyzed by the methyltransferase easF that methylates 4-dimethylallyl-L-tryptophan in the presence of S-adenosyl-L-methionine, resulting in the formation of 4-dimethylallyl-L-abrine. The catalase easC and the FAD-dependent oxidoreductase easE then transform 4-dimethylallyl-L-abrine to chanoclavine-I which is further oxidized by easD in the presence of NAD(+), resulting in the formation of chanoclavine-I aldehyde. Chanoclavine-I aldehyde is the precursor of ergoamides and ergopeptines in Clavicipitaceae, and clavine-type alcaloids such as fumiclavine in Trichocomaceae. However, the metabolites downstream of chanoclavine-I aldehyde in Arthrodermataceae have not been identified yet. The chain is Chanoclavine-I dehydrogenase easD from Trichophyton verrucosum (strain HKI 0517).